The following is a 149-amino-acid chain: 1,4-dihydroxy-2-naphthoyl-CoA hydrolase (149 aa).

The active site involves aspartate 19.

This sequence belongs to the 4-hydroxybenzoyl-CoA thioesterase family. DHNA-CoA hydrolase subfamily.

It catalyses the reaction 1,4-dihydroxy-2-naphthoyl-CoA + H2O = 1,4-dihydroxy-2-naphthoate + CoA + H(+). Its pathway is cofactor biosynthesis; phylloquinone biosynthesis. It functions in the pathway quinol/quinone metabolism; 1,4-dihydroxy-2-naphthoate biosynthesis; 1,4-dihydroxy-2-naphthoate from chorismate: step 7/7. In terms of biological role, catalyzes the hydrolysis of 1,4-dihydroxy-2-naphthoyl-CoA (DHNA-CoA) to 1,4-dihydroxy-2-naphthoate (DHNA), a reaction involved in phylloquinone (vitamin K1) biosynthesis. The protein is 1,4-dihydroxy-2-naphthoyl-CoA hydrolase of Synechococcus sp. (strain CC9902).